Here is a 1135-residue protein sequence, read N- to C-terminus: LRR receptor-like serine/threonine-protein kinase RGI2 (1135 aa).

The first 35 residues, M1–A35, serve as a signal peptide directing secretion. Topologically, residues S36 to R723 are extracellular. A disulfide bridge connects residues C69 and C76. Residues N101 and N117 are each glycosylated (N-linked (GlcNAc...) asparagine). LRR repeat units lie at residues F105–C129, S130–L153, K154–C177, and S179–T203. 4 consecutive short sequence motifs (small peptide recognition) follow at residues F186 to D187, R208 to G211, V231 to A236, and Y259. 19 LRR repeats span residues C226 to L250, S251 to C274, E276 to L298, Q299 to K323, L325 to N345, L346 to C370, K372 to K395, L397 to C418, Q419 to L442, N444 to C466, T467 to L490, Q491 to C514, Q516 to L538, T539 to L562, S564 to C586, T587 to I610, D612 to A634, L635 to L658, and E659 to Q683. An N-linked (GlcNAc...) asparagine glycan is attached at N273. The Small peptide recognition motif lies at F281 to Y283. The short motif at D329–M332 is the Small peptide recognition element. An N-linked (GlcNAc...) asparagine glycan is attached at N345. A Small peptide recognition motif is present at residues E351 to M353. Residues N358 and N369 are each glycosylated (N-linked (GlcNAc...) asparagine). Short sequence motifs (small peptide recognition) lie at residues I399–W403 and D425–Q428. N444 is a glycosylation site (N-linked (GlcNAc...) asparagine). The short motif at K447 to I451 is the Small peptide recognition element. N465 carries an N-linked (GlcNAc...) asparagine glycan. A Small peptide recognition motif is present at residues R471 to R473. N-linked (GlcNAc...) asparagine glycosylation is found at N492, N502, N521, and N524. N598 and N618 each carry an N-linked (GlcNAc...) asparagine glycan. N-linked (GlcNAc...) asparagine glycosylation is found at N665 and N707. The helical transmembrane segment at I724–V744 threads the bilayer. Residues I745–K1135 are Cytoplasmic-facing. A Phosphothreonine modification is found at T777. The region spanning L785–I1066 is the Protein kinase domain. ATP is bound by residues I791 to V799 and K813. 2 positions are modified to phosphotyrosine: Y868 and Y907. D920 serves as the catalytic Proton acceptor. Phosphotyrosine is present on residues Y963 and Y970. Residues D1077–K1135 are disordered. Residues S1108–S1128 show a composition bias toward low complexity.

It belongs to the protein kinase superfamily. Ser/Thr protein kinase family. In terms of assembly, binds to RGF peptides such as RGF1, GLV5/CLEL1/RGF2, GLV7/CLEL3/RGF3, GLV3/RGF4, GLV10/CLEL7/RGF5 and RGF10/CLELN; these interactions trigger the formation of heterodimers with SERK1. Interacts with UBP13. Phosphorylated and ubiquitinated upon interaction with RGF1, thus leading to activation a subsequent degradation. Stabilized by UBP12 and UBP13-mediated deubiquitination. Post-translationally, autophosphorylated. Specific to root meristems, especially in lateral root meristems (LRM).

It is found in the membrane. The catalysed reaction is L-seryl-[protein] + ATP = O-phospho-L-seryl-[protein] + ADP + H(+). It catalyses the reaction L-threonyl-[protein] + ATP = O-phospho-L-threonyl-[protein] + ADP + H(+). Its function is as follows. Together with RGI1, RGI3, RGI4 and RGI5, acts as a receptor of RGF peptides (e.g. RGF1, GLV5/CLEL1/RGF2, GLV7/CLEL3/RGF3, GLV3/RGF4, GLV10/CLEL7/RGF5 and RGF10/CLELN), peptide hormones which maintain the postembryonic root stem cell niche by regulating the expression levels and patterns of the transcription factor PLETHORA (PLT, e.g. PLT1 and PLT2). Links RGF peptides signal with their downstream components. This chain is LRR receptor-like serine/threonine-protein kinase RGI2, found in Arabidopsis thaliana (Mouse-ear cress).